Reading from the N-terminus, the 230-residue chain is All-trans retinoic acid-induced differentiation factor (230 aa).

The N-terminal stretch at 1 to 26 is a signal peptide; sequence MTANVTVSSMYLFTVLLLLFNVYVNS. Residues 27 to 200 are Extracellular-facing; it reads QDTDAQLCQM…YKCMRQGEFP (174 aa). Positions 152–194 constitute an EGF-like domain; it reads QKNACNQTVQMPLVCPENSLCSPYGPGFFECSCLNNFHGYKCM. Intrachain disulfides connect Cys156–Cys172, Cys166–Cys182, and Cys184–Cys193. Residues 201 to 221 traverse the membrane as a helical segment; the sequence is LVKVLGILTASTVVVSSVLWF. Residues 222–230 lie on the Cytoplasmic side of the membrane; the sequence is TQRRKVKNT.

It is found in the nucleus envelope. The protein resides in the cell membrane. It localises to the lysosome membrane. Its function is as follows. Involved in osteoblast cell differentiation. May play a role in inducing the cell cycle arrest. In Danio rerio (Zebrafish), this protein is All-trans retinoic acid-induced differentiation factor (atraid).